The primary structure comprises 148 residues: Large ribosomal subunit protein bL9 (148 aa).

The protein belongs to the bacterial ribosomal protein bL9 family.

Binds to the 23S rRNA. This Lysinibacillus sphaericus (strain C3-41) protein is Large ribosomal subunit protein bL9.